A 125-amino-acid polypeptide reads, in one-letter code: Fluoride-specific ion channel FluC (125 aa).

A run of 4 helical transmembrane segments spans residues 2–22 (WLSI…RTGF), 35–55 (LGTL…LAFF), 68–88 (LIIT…AEVV), and 98–118 (WALG…LLGI). Na(+) contacts are provided by Gly-75 and Thr-78.

This sequence belongs to the fluoride channel Fluc/FEX (TC 1.A.43) family.

The protein resides in the cell inner membrane. The enzyme catalyses fluoride(in) = fluoride(out). With respect to regulation, na(+) is not transported, but it plays an essential structural role and its presence is essential for fluoride channel function. Fluoride-specific ion channel. Important for reducing fluoride concentration in the cell, thus reducing its toxicity. The protein is Fluoride-specific ion channel FluC of Polynucleobacter asymbioticus (strain DSM 18221 / CIP 109841 / QLW-P1DMWA-1) (Polynucleobacter necessarius subsp. asymbioticus).